A 210-amino-acid polypeptide reads, in one-letter code: Urease accessory protein UreF (210 aa).

It belongs to the UreF family. UreD, UreF and UreG form a complex that acts as a GTP-hydrolysis-dependent molecular chaperone, activating the urease apoprotein by helping to assemble the nickel containing metallocenter of UreC. The UreE protein probably delivers the nickel.

The protein resides in the cytoplasm. Its function is as follows. Required for maturation of urease via the functional incorporation of the urease nickel metallocenter. The protein is Urease accessory protein UreF of Dinoroseobacter shibae (strain DSM 16493 / NCIMB 14021 / DFL 12).